Consider the following 88-residue polypeptide: LYR motif-containing protein 2 (88 aa).

The transit peptide at 1-19 (MATSRLPPATLTLKQFMRR) directs the protein to the mitochondrion.

Belongs to the complex I LYR family.

The protein localises to the mitochondrion. Involved in efficient integration of the N-module into mitochondrial respiratory chain complex I. This chain is LYR motif-containing protein 2 (LYRM2), found in Bos taurus (Bovine).